Reading from the N-terminus, the 148-residue chain is NADPH-dependent 7-cyano-7-deazaguanine reductase (148 aa).

Cys50 acts as the Thioimide intermediate in catalysis. The active-site Proton donor is Asp57. Residues 72–74 (VES) and 91–92 (HE) each bind substrate.

This sequence belongs to the GTP cyclohydrolase I family. QueF type 1 subfamily.

It localises to the cytoplasm. The catalysed reaction is 7-aminomethyl-7-carbaguanine + 2 NADP(+) = 7-cyano-7-deazaguanine + 2 NADPH + 3 H(+). Its pathway is tRNA modification; tRNA-queuosine biosynthesis. Functionally, catalyzes the NADPH-dependent reduction of 7-cyano-7-deazaguanine (preQ0) to 7-aminomethyl-7-deazaguanine (preQ1). The polypeptide is NADPH-dependent 7-cyano-7-deazaguanine reductase (Helicobacter pylori (strain P12)).